The chain runs to 1009 residues: 2-oxoglutarate dehydrogenase, mitochondrial (1009 aa).

A mitochondrion-targeting transit peptide spans 1–39 (MLRFIPSSAKARALRRSAVTAYRLNRLTCLSSLQQNRTF). Arginine 305, aspartate 404, asparagine 437, isoleucine 439, and glutamine 669 together coordinate thiamine diphosphate. The Mg(2+) site is built by aspartate 404, asparagine 437, and isoleucine 439.

The protein belongs to the alpha-ketoglutarate dehydrogenase family. It depends on thiamine diphosphate as a cofactor. Requires Mg(2+) as cofactor.

The protein resides in the mitochondrion matrix. The enzyme catalyses N(6)-[(R)-lipoyl]-L-lysyl-[protein] + 2-oxoglutarate + H(+) = N(6)-[(R)-S(8)-succinyldihydrolipoyl]-L-lysyl-[protein] + CO2. With respect to regulation, catabolite repressed. Its function is as follows. The 2-oxoglutarate dehydrogenase complex catalyzes the overall conversion of 2-oxoglutarate to succinyl-CoA and CO(2). It contains multiple copies of three enzymatic components: 2-oxoglutarate dehydrogenase (E1), dihydrolipoamide succinyltransferase (E2) and lipoamide dehydrogenase (E3). The protein is 2-oxoglutarate dehydrogenase, mitochondrial (kgd1) of Schizosaccharomyces pombe (strain 972 / ATCC 24843) (Fission yeast).